Here is a 46-residue protein sequence, read N- to C-terminus: Peroxidase 1 (46 aa).

It belongs to the peroxidase family. Classical plant (class III) peroxidase subfamily. Requires heme b as cofactor. Ca(2+) is required as a cofactor.

Its subcellular location is the secreted. It catalyses the reaction 2 a phenolic donor + H2O2 = 2 a phenolic radical donor + 2 H2O. Its function is as follows. Removal of H(2)O(2), oxidation of toxic reductants, biosynthesis and degradation of lignin, suberization, auxin catabolism, response to environmental stresses such as wounding, pathogen attack and oxidative stress. These functions might be dependent on each isozyme/isoform in each plant tissue. This is Peroxidase 1 from Catharanthus roseus (Madagascar periwinkle).